A 204-amino-acid chain; its full sequence is ATP-dependent Clp protease proteolytic subunit (204 aa).

Ser-101 serves as the catalytic Nucleophile. His-126 is a catalytic residue.

This sequence belongs to the peptidase S14 family. Component of the chloroplastic Clp protease core complex.

The protein localises to the plastid. It is found in the chloroplast stroma. The enzyme catalyses Hydrolysis of proteins to small peptides in the presence of ATP and magnesium. alpha-casein is the usual test substrate. In the absence of ATP, only oligopeptides shorter than five residues are hydrolyzed (such as succinyl-Leu-Tyr-|-NHMec, and Leu-Tyr-Leu-|-Tyr-Trp, in which cleavage of the -Tyr-|-Leu- and -Tyr-|-Trp bonds also occurs).. In terms of biological role, cleaves peptides in various proteins in a process that requires ATP hydrolysis. Has a chymotrypsin-like activity. Plays a major role in the degradation of misfolded proteins. This Phalaenopsis aphrodite subsp. formosana (Moth orchid) protein is ATP-dependent Clp protease proteolytic subunit.